Here is a 673-residue protein sequence, read N- to C-terminus: ATP-binding cassette sub-family G member 8 (673 aa).

A compositionally biased stretch (basic and acidic residues) spans 1–11; it reads MAGKAAEERGL. Residues 1–25 are disordered; the sequence is MAGKAAEERGLPKGATPQDTSGLQD. At 1 to 416 the chain is on the cytoplasmic side; that stretch reads MAGKAAEERG…ISNDFRDLPT (416 aa). Positions 47–313 constitute an ABC transporter domain; the sequence is LEVRDLNYQV…FTAIGYPCPR (267 aa). The 255-residue stretch at 411–665 folds into the ABC transmembrane type-2 domain; that stretch reads FRDLPTLLIH…VLYYVSLRFI (255 aa). A helical transmembrane segment spans residues 417–437; sequence LLIHGAEACLMSMTIGFLYFG. The Extracellular portion of the chain corresponds to 438-447; sequence HGSIQLSFMD. A helical membrane pass occupies residues 448–468; the sequence is TAALLFMIGALIPFNVILDVI. Residues 469 to 497 lie on the Cytoplasmic side of the membrane; it reads SKCYSERAMLYYELEDGLYTTGPYFFAKI. A helical membrane pass occupies residues 498–518; it reads LGELPEHCAYIIIYGMPTYWL. The Extracellular portion of the chain corresponds to 519-527; sequence ANLRPGLQP. A helical transmembrane segment spans residues 528–548; sequence FLLHFLLVWLVVFCCRIMALA. Over 549–555 the chain is Cytoplasmic; sequence AAALLPT. A helical membrane pass occupies residues 556-576; it reads FHMASFFSNALYNSFYLAGGF. At 577-639 the chain is on the extracellular side; sequence MINLSSLWTV…LSVMELDSYP (63 aa). A glycan (N-linked (GlcNAc...) asparagine) is linked at N619. The helical transmembrane segment at 640 to 660 threads the bilayer; it reads LYAIYLIVIGLSGGFMVLYYV. The Cytoplasmic portion of the chain corresponds to 661 to 673; the sequence is SLRFIKQKPSQDW.

The protein belongs to the ABC transporter superfamily. ABCG family. Eye pigment precursor importer (TC 3.A.1.204) subfamily. In terms of assembly, heterodimer with ABCG8. Requires Mg(2+) as cofactor. Post-translationally, N-glycosylated. In terms of tissue distribution, predominantly expressed in the liver. Low expression levels in the small intestine and colon. Very low levels in other tissues, including brain, heart and spleen.

Its subcellular location is the cell membrane. The protein localises to the apical cell membrane. The catalysed reaction is cholesterol(in) + ATP + H2O = cholesterol(out) + ADP + phosphate + H(+). It catalyses the reaction sitosterol(in) + ATP + H2O = sitosterol(out) + ADP + phosphate + H(+). The ATPase activity of the heterodimer is stimulated by cholate. Taurocholate, glycocholate, taurochenodeoxycholate, glycochenodeoxycholate and taurodeoxycholate also stimulate ATPase activity, but to a lower degree. Glycodeoxycholate has no significant effect on ATPase activity. ATPase activity is inhibited by vanadate and by berillium fluoride. In terms of biological role, ABCG5 and ABCG8 form an obligate heterodimer that mediates Mg(2+)- and ATP-dependent sterol transport across the cell membrane. Plays an essential role in the selective transport of the dietary cholesterol in and out of the enterocytes and in the selective sterol excretion by the liver into bile. Required for normal sterol homeostasis. The heterodimer with ABCG5 has ATPase activity. In Homo sapiens (Human), this protein is ATP-binding cassette sub-family G member 8.